The primary structure comprises 501 residues: Zinc finger and SCAN domain-containing protein 12 (501 aa).

Residues K20 and K26 each participate in a glycyl lysine isopeptide (Lys-Gly) (interchain with G-Cter in SUMO2) cross-link. One can recognise an SCAN box domain in the interval 51-132 (QFCYQETSGP…DLERELDELG (82 aa)). Positions 175-194 (REAQEEQVSGVETGNEPRNV) are disordered. Positions 180-194 (EQVSGVETGNEPRNV) are enriched in polar residues. Residue K197 forms a Glycyl lysine isopeptide (Lys-Gly) (interchain with G-Cter in SUMO2) linkage. The disordered stretch occupies residues 223 to 255 (EAHNPGEESSGISHEDSQPLRNENGVNSPANSE). The span at 241–253 (PLRNENGVNSPAN) shows a compositional bias: polar residues. 6 consecutive C2H2-type zinc fingers follow at residues 269–291 (HGCD…KRVH), 297–319 (YKCE…KVVH), 325–347 (YKCN…QRLH), 353–375 (YHCN…LKSH), 381–403 (YQCL…QGVH), and 409–431 (YECN…QETH). The segment at 429-450 (ETHHKEKPFTQSGPIQQQRNHT) is disordered. The span at 437-447 (FTQSGPIQQQR) shows a compositional bias: polar residues. The C2H2-type 7 zinc finger occupies 455-477 (YKCSVCGKAFIQKISLIEHEQIH). The C2H2-type 8; degenerate zinc-finger motif lies at 483 to 501 (YKCAEGGKAFIQMSELTEH).

It belongs to the krueppel C2H2-type zinc-finger protein family. Testis specific.

Its subcellular location is the nucleus. May be involved in transcriptional regulation. The protein is Zinc finger and SCAN domain-containing protein 12 (Zscan12) of Mus musculus (Mouse).